We begin with the raw amino-acid sequence, 481 residues long: RuvB-like helicase 2 (481 aa).

73 to 80 (GEPSTGKT) serves as a coordination point for ATP. Residues 453-481 (EEVERDPAAGGGAKRRVEGGGGDAQPMEH) form a disordered region.

Belongs to the RuvB family. Forms homohexameric rings. May form a dodecamer with rept made of two stacked hexameric rings. Component of the chromatin remodeling Ino80 complex. Interacts with Myc and pont. As to expression, higher expression occurs in primordia of mesoderm, anterior and posterior midgut and cephalic furrow early in gastrulation, as well as in endoderm and mesoderm lineages during germ band extension. Later in development expression is only maintained in endoderm cells. Expressed in thoracic and abdominal segment neural precursors of all embryonic chordotonal organs.

The protein localises to the nucleus. The enzyme catalyses ATP + H2O = ADP + phosphate + H(+). Acts as a transcriptional coactivator in Wg signaling caused by altered arm signaling. Pont and rept interfere antagonistically with nuclear arm signaling function, and are required to enhance or reduce arm activity, respectively. Also an essential cofactor for the normal function of Myc; required for cellular proliferation and growth. Its function is as follows. Proposed core component of the chromatin remodeling Ino80 complex which is involved in transcriptional regulation, DNA replication and probably DNA repair. This chain is RuvB-like helicase 2, found in Drosophila melanogaster (Fruit fly).